A 247-amino-acid polypeptide reads, in one-letter code: Peroxisomal membrane protein 11A (247 aa).

Residues Met-1–Arg-83 lie on the Cytoplasmic side of the membrane. The helical transmembrane segment at Leu-84 to Val-105 threads the bilayer. Topologically, residues Arg-106–Pro-219 are lumenal. The chain crosses the membrane as a helical span at residues Gly-220–Tyr-239. Residues Gly-220–Tyr-239 are required for homodimerization, interaction with PEX11G, and peroxisomal localization. The Cytoplasmic segment spans residues Pro-240–Arg-247.

Belongs to the peroxin-11 family. Homodimer. Heterodimer with PEX11G. Probably interacts with COPB2 and COPA. Interacts with PEX19. Interacts with FIS1. Seems not to be N-glycosylated.

The protein resides in the peroxisome membrane. May be involved in peroxisomal proliferation and may regulate peroxisomes division. May mediate binding of coatomer proteins to the peroxisomal membrane. Promotes membrane protrusion and elongation on the peroxisomal surface. This Homo sapiens (Human) protein is Peroxisomal membrane protein 11A (PEX11A).